The following is a 306-amino-acid chain: Methionyl-tRNA formyltransferase (306 aa).

110–113 contacts (6S)-5,6,7,8-tetrahydrofolate; it reads SLLP.

It belongs to the Fmt family.

It catalyses the reaction L-methionyl-tRNA(fMet) + (6R)-10-formyltetrahydrofolate = N-formyl-L-methionyl-tRNA(fMet) + (6S)-5,6,7,8-tetrahydrofolate + H(+). In terms of biological role, attaches a formyl group to the free amino group of methionyl-tRNA(fMet). The formyl group appears to play a dual role in the initiator identity of N-formylmethionyl-tRNA by promoting its recognition by IF2 and preventing the misappropriation of this tRNA by the elongation apparatus. The chain is Methionyl-tRNA formyltransferase from Brucella anthropi (strain ATCC 49188 / DSM 6882 / CCUG 24695 / JCM 21032 / LMG 3331 / NBRC 15819 / NCTC 12168 / Alc 37) (Ochrobactrum anthropi).